The chain runs to 497 residues: uncharacterized protein (497 aa).

The next 11 helical transmembrane spans lie at 91–111, 119–139, 149–169, 179–199, 215–235, 283–303, 319–339, 347–367, 374–394, 406–426, and 439–459; these read WVGT…STLL, VTSA…LVHS, LLGI…AQWY, AFLV…SYGL, ILFI…FIHI, MYLY…LSNF, LLMN…FGLI, MDIA…IAFA, LAGY…LSCI, FMSA…PQTF, and VSFV…YAVN.

It belongs to the major facilitator superfamily. Allantoate permease family.

It is found in the golgi apparatus. The protein resides in the membrane. This is an uncharacterized protein from Schizosaccharomyces pombe (strain 972 / ATCC 24843) (Fission yeast).